A 211-amino-acid chain; its full sequence is Protein-L-isoaspartate O-methyltransferase (211 aa).

Ser59 is an active-site residue.

Belongs to the methyltransferase superfamily. L-isoaspartyl/D-aspartyl protein methyltransferase family.

The protein resides in the cytoplasm. The catalysed reaction is [protein]-L-isoaspartate + S-adenosyl-L-methionine = [protein]-L-isoaspartate alpha-methyl ester + S-adenosyl-L-homocysteine. Functionally, catalyzes the methyl esterification of L-isoaspartyl residues in peptides and proteins that result from spontaneous decomposition of normal L-aspartyl and L-asparaginyl residues. It plays a role in the repair and/or degradation of damaged proteins. This Ignicoccus hospitalis (strain KIN4/I / DSM 18386 / JCM 14125) protein is Protein-L-isoaspartate O-methyltransferase.